We begin with the raw amino-acid sequence, 244 residues long: Small ribosomal subunit protein uS3 (244 aa).

The region spanning 39 to 110 (IRNFIQKKYS…QVRINVVEVE (72 aa)) is the KH type-2 domain. A disordered region spans residues 221–244 (GAIPRRKGSRKPQQFEDRSSNENS). Residues 233–244 (QQFEDRSSNENS) show a composition bias toward basic and acidic residues.

The protein belongs to the universal ribosomal protein uS3 family. As to quaternary structure, part of the 30S ribosomal subunit. Forms a tight complex with proteins S10 and S14.

Functionally, binds the lower part of the 30S subunit head. Binds mRNA in the 70S ribosome, positioning it for translation. This is Small ribosomal subunit protein uS3 from Prochlorococcus marinus (strain MIT 9515).